Here is a 71-residue protein sequence, read N- to C-terminus: MSRLFMILLVICVITLGTDASQAEDSGTEKRSWPVPDAFLKAFQSWPLTDPDLKAGFKVNSAQRVAHGYGK.

The N-terminal stretch at Met1–Ala20 is a signal peptide. The propeptide occupies Ser21 to Arg31. The residue at position 69 (Tyr69) is a Tyrosine amide.

The protein belongs to the conotoxin NSf-1 superfamily. As to expression, expressed by the venom duct.

It localises to the secreted. Functionally, probable neurotoxin with unknown target. Possibly targets ion channels. This Conus planorbis (Planorbis cone) protein is Conotoxin Pl071.